A 193-amino-acid chain; its full sequence is ATP synthase subunit b (193 aa).

The helical transmembrane segment at 24–44 (PLAELIVGLLAFGLLVGFFFW) threads the bilayer.

It belongs to the ATPase B chain family. In terms of assembly, F-type ATPases have 2 components, F(1) - the catalytic core - and F(0) - the membrane proton channel. F(1) has five subunits: alpha(3), beta(3), gamma(1), delta(1), epsilon(1). F(0) has three main subunits: a(1), b(2) and c(10-14). The alpha and beta chains form an alternating ring which encloses part of the gamma chain. F(1) is attached to F(0) by a central stalk formed by the gamma and epsilon chains, while a peripheral stalk is formed by the delta and b chains.

It localises to the cell membrane. F(1)F(0) ATP synthase produces ATP from ADP in the presence of a proton or sodium gradient. F-type ATPases consist of two structural domains, F(1) containing the extramembraneous catalytic core and F(0) containing the membrane proton channel, linked together by a central stalk and a peripheral stalk. During catalysis, ATP synthesis in the catalytic domain of F(1) is coupled via a rotary mechanism of the central stalk subunits to proton translocation. In terms of biological role, component of the F(0) channel, it forms part of the peripheral stalk, linking F(1) to F(0). This chain is ATP synthase subunit b, found in Parafrankia sp. (strain EAN1pec).